Here is a 185-residue protein sequence, read N- to C-terminus: MSVALSIPLLSLPEDMREALAAAAGPVYSGDRFRRQLLQTPCSGVACIGDYVSQACIATLSTAWTGPLILVVDGKTRRESWRDMVVPQGFRVHRVRSPPGSLSLEAYTTICKLMEEYGRHVVFVEGEEDLIALAALDCGIDWTVVYGLPGVGGVVVHRCLRKPGLENSSVLAFKPGTGVHHQSSP.

Positions 50, 52, 73, 75, and 128 each coordinate GTP.

It belongs to the GTP-dependent DPCK family.

The catalysed reaction is 3'-dephospho-CoA + GTP = GDP + CoA + H(+). Its pathway is cofactor biosynthesis; coenzyme A biosynthesis. Catalyzes the GTP-dependent phosphorylation of the 3'-hydroxyl group of dephosphocoenzyme A to form coenzyme A (CoA). The protein is GTP-dependent dephospho-CoA kinase of Aeropyrum pernix (strain ATCC 700893 / DSM 11879 / JCM 9820 / NBRC 100138 / K1).